A 430-amino-acid chain; its full sequence is Protein translocase subunit SecY (430 aa).

10 helical membrane passes run isoleucine 18–glycine 38, phenylalanine 68–leucine 88, leucine 117–leucine 137, isoleucine 147–leucine 167, glycine 179–phenylalanine 199, valine 217–alanine 237, glycine 269–phenylalanine 289, asparagine 308–valine 328, phenylalanine 368–methionine 388, and glycine 389–isoleucine 409.

It belongs to the SecY/SEC61-alpha family. Component of the Sec protein translocase complex. Heterotrimer consisting of SecY, SecE and SecG subunits. The heterotrimers can form oligomers, although 1 heterotrimer is thought to be able to translocate proteins. Interacts with the ribosome. Interacts with SecDF, and other proteins may be involved. Interacts with SecA.

It localises to the cell membrane. The central subunit of the protein translocation channel SecYEG. Consists of two halves formed by TMs 1-5 and 6-10. These two domains form a lateral gate at the front which open onto the bilayer between TMs 2 and 7, and are clamped together by SecE at the back. The channel is closed by both a pore ring composed of hydrophobic SecY resides and a short helix (helix 2A) on the extracellular side of the membrane which forms a plug. The plug probably moves laterally to allow the channel to open. The ring and the pore may move independently. This chain is Protein translocase subunit SecY, found in Staphylococcus aureus (strain NCTC 8325 / PS 47).